The following is a 209-amino-acid chain: MKRLGADFYQMPTILLAERLLGKIFVHHEVSGRVTKGRIVETEAYLGDGDEACHAWRGMTERNHVMFGPPGHLYIYFSYGCHYLANIVSEQKGIAGAVLLRAMEPIEGIEWMQERRGTTDERALMSGPGKLTQALGLGPAHYGESLLGDICWLEEAPDIPPELIGTSPRIGISRSTDLLWRKFIAGSPYISKTQPGPPPKKRKKGLESS.

The disordered stretch occupies residues 189–209 (YISKTQPGPPPKKRKKGLESS). The segment covering 199–209 (PKKRKKGLESS) has biased composition (basic residues).

The protein belongs to the DNA glycosylase MPG family.

This Chlorobaculum tepidum (strain ATCC 49652 / DSM 12025 / NBRC 103806 / TLS) (Chlorobium tepidum) protein is Putative 3-methyladenine DNA glycosylase.